A 349-amino-acid polypeptide reads, in one-letter code: MTSAADQQPPPIRTDVLIVGAGPVGLFAAFEAGVIGLSCQIVDGLDKVGGQCIELYPDKPIYDIPAIASCTARELVERLLAQCKPFDPPIHLEQRVESVEQNDDGRWTVRTDRGLVFDVAAILLAAGNGAFVPQKLALAEAVPLESRHVHYSVPRLADFADKVVVVAGGGDSALDWALALRKVARRVTLVHRRSGFSAADSSVASMRRAVEAGEMDFIVGAIAGLNVEGDALKSITLRHIEGETQLAAEHLVALYGLVADLGPIAQWGLSIHAGRVDVDTSNYESSRPGIFAVGDIANYPNKQKLILSGFHEASLALRRAYSYAYPDKKRVHVHSSYDAKLAEKVSATG.

The FAD site is built by Asp43, Gln51, Tyr56, Val96, Phe131, Asp295, and Ser336.

Belongs to the ferredoxin--NADP reductase type 2 family. In terms of assembly, homodimer. It depends on FAD as a cofactor.

The catalysed reaction is 2 reduced [2Fe-2S]-[ferredoxin] + NADP(+) + H(+) = 2 oxidized [2Fe-2S]-[ferredoxin] + NADPH. The chain is Ferredoxin--NADP reductase from Paraburkholderia phytofirmans (strain DSM 17436 / LMG 22146 / PsJN) (Burkholderia phytofirmans).